A 387-amino-acid polypeptide reads, in one-letter code: Succinate--CoA ligase [ADP-forming] subunit beta (387 aa).

In terms of domain architecture, ATP-grasp spans 9–236; sequence KGLFAKHNVP…RAATDPLELK (228 aa). ATP contacts are provided by residues Lys-45, 52–54, Ser-94, and Glu-99; that span reads GRG. 2 residues coordinate Mg(2+): Asn-191 and Asp-205. Residues Asn-256 and 318 to 320 each bind substrate; that span reads GIT.

The protein belongs to the succinate/malate CoA ligase beta subunit family. Heterotetramer of two alpha and two beta subunits. It depends on Mg(2+) as a cofactor.

It catalyses the reaction succinate + ATP + CoA = succinyl-CoA + ADP + phosphate. The enzyme catalyses GTP + succinate + CoA = succinyl-CoA + GDP + phosphate. Its pathway is carbohydrate metabolism; tricarboxylic acid cycle; succinate from succinyl-CoA (ligase route): step 1/1. Succinyl-CoA synthetase functions in the citric acid cycle (TCA), coupling the hydrolysis of succinyl-CoA to the synthesis of either ATP or GTP and thus represents the only step of substrate-level phosphorylation in the TCA. The beta subunit provides nucleotide specificity of the enzyme and binds the substrate succinate, while the binding sites for coenzyme A and phosphate are found in the alpha subunit. The chain is Succinate--CoA ligase [ADP-forming] subunit beta from Mycobacterium ulcerans (strain Agy99).